The chain runs to 543 residues: Chaperonin GroEL 7 (543 aa).

ATP contacts are provided by residues 30 to 33 (TLGP), Lys51, 87 to 91 (DGTTT), Gly415, and Asp496.

Belongs to the chaperonin (HSP60) family. As to quaternary structure, forms a cylinder of 14 subunits composed of two heptameric rings stacked back-to-back. Interacts with the co-chaperonin GroES.

The protein localises to the cytoplasm. The enzyme catalyses ATP + H2O + a folded polypeptide = ADP + phosphate + an unfolded polypeptide.. Its function is as follows. Together with its co-chaperonin GroES, plays an essential role in assisting protein folding. The GroEL-GroES system forms a nano-cage that allows encapsulation of the non-native substrate proteins and provides a physical environment optimized to promote and accelerate protein folding. The sequence is that of Chaperonin GroEL 7 from Bradyrhizobium diazoefficiens (strain JCM 10833 / BCRC 13528 / IAM 13628 / NBRC 14792 / USDA 110).